We begin with the raw amino-acid sequence, 1518 residues long: Hormone receptor 4 (1518 aa).

Disordered stretches follow at residues arginine 30–alanine 50, threonine 145–glutamate 327, proline 380–alanine 587, valine 672–alanine 820, and serine 887–aspartate 913. Residues aspartate 34–proline 46 are compositionally biased toward polar residues. Low complexity-rich tracts occupy residues threonine 145–glycine 189 and serine 208–serine 219. The segment covering glutamate 238–threonine 260 has biased composition (gly residues). Over residues serine 291 to alanine 323 the composition is skewed to low complexity. Over residues glutamine 400–glutamine 429 the composition is skewed to basic and acidic residues. Composition is skewed to polar residues over residues serine 430 to histidine 451 and arginine 475 to methionine 489. Composition is skewed to low complexity over residues glutamine 490–leucine 529, histidine 546–glutamine 586, glycine 681–serine 705, and glycine 738–serine 799. Gly residues-rich tracts occupy residues serine 800–glycine 812 and glycine 892–glycine 902. The segment at residues proline 918 to glutamate 993 is a DNA-binding region (nuclear receptor). NR C4-type zinc fingers lie at residues cysteine 921–cysteine 941 and cysteine 957–cysteine 976. Disordered stretches follow at residues lysine 1015–alanine 1101, leucine 1142–histidine 1210, and lysine 1341–isoleucine 1371. Over residues glutamine 1021–serine 1060 the composition is skewed to low complexity. Basic residues predominate over residues proline 1061–glutamine 1077. Low complexity-rich tracts occupy residues glutamine 1078 to alanine 1101 and glutamine 1144 to glutamine 1193. The segment covering glutamine 1194–alanine 1205 has biased composition (gly residues). The 269-residue stretch at histidine 1250–arginine 1518 folds into the NR LBD domain. Over residues histidine 1351 to serine 1368 the composition is skewed to low complexity.

The protein belongs to the nuclear hormone receptor family. NR1 subfamily. As to expression, during L2 and L3 stages, strong constitutive expression is seen in the ring gland. Lower expression is detected in specific neurons of the central nervous system (CNS) (at protein level).

It is found in the nucleus. Its function is as follows. Coordinates growth and maturation by mediating endocrine responses to the attainment of critical weight during larval development. Plays a central role in the genetic cascades triggered by the steroid hormone ecdysone at the onset of metamorphosis, acting as both a repressor of the early ecdysone-induced regulatory genes and an inducer of the ftz-f1 midprepupal competence factor. The sequence is that of Hormone receptor 4 (Hr4) from Drosophila melanogaster (Fruit fly).